The chain runs to 541 residues: Chaperonin GroEL 1 (541 aa).

ATP-binding positions include 29–32 (TLGP), 86–90 (DGTTT), G413, 478–480 (NAA), and D494. A disordered region spans residues 520–541 (VVEKPAEAEDDGHGHGHGHHHH). Over residues 523-533 (KPAEAEDDGHG) the composition is skewed to basic and acidic residues.

This sequence belongs to the chaperonin (HSP60) family. Forms a cylinder of 14 subunits composed of two heptameric rings stacked back-to-back. Interacts with the co-chaperonin GroES.

It localises to the cytoplasm. It catalyses the reaction ATP + H2O + a folded polypeptide = ADP + phosphate + an unfolded polypeptide.. In terms of biological role, together with its co-chaperonin GroES, plays an essential role in assisting protein folding. The GroEL-GroES system forms a nano-cage that allows encapsulation of the non-native substrate proteins and provides a physical environment optimized to promote and accelerate protein folding. This chain is Chaperonin GroEL 1, found in Mycolicibacterium gilvum (strain PYR-GCK) (Mycobacterium gilvum (strain PYR-GCK)).